Consider the following 106-residue polypeptide: uncharacterized protein (106 aa).

Residues 1 to 31 form the signal peptide; the sequence is MKKKTKIILSLLAALIVILIVLPVLSPVVFT.

This is an uncharacterized protein from Bacillus subtilis (strain 168).